The chain runs to 440 residues: 3-phosphoshikimate 1-carboxyvinyltransferase (440 aa).

The 3-phosphoshikimate site is built by Lys-25, Ser-26, and Arg-30. Residue Lys-25 coordinates phosphoenolpyruvate. Gly-96 and Arg-124 together coordinate phosphoenolpyruvate. Ser-168, Gln-169, Asp-310, and Lys-337 together coordinate 3-phosphoshikimate. Residue Gln-169 coordinates phosphoenolpyruvate. Asp-310 functions as the Proton acceptor in the catalytic mechanism. Phosphoenolpyruvate-binding residues include Arg-341, Arg-382, and Lys-409.

The protein belongs to the EPSP synthase family. As to quaternary structure, monomer.

Its subcellular location is the cytoplasm. It carries out the reaction 3-phosphoshikimate + phosphoenolpyruvate = 5-O-(1-carboxyvinyl)-3-phosphoshikimate + phosphate. It functions in the pathway metabolic intermediate biosynthesis; chorismate biosynthesis; chorismate from D-erythrose 4-phosphate and phosphoenolpyruvate: step 6/7. In terms of biological role, catalyzes the transfer of the enolpyruvyl moiety of phosphoenolpyruvate (PEP) to the 5-hydroxyl of shikimate-3-phosphate (S3P) to produce enolpyruvyl shikimate-3-phosphate and inorganic phosphate. In Chlamydia trachomatis serovar D (strain ATCC VR-885 / DSM 19411 / UW-3/Cx), this protein is 3-phosphoshikimate 1-carboxyvinyltransferase.